The chain runs to 287 residues: Uroplakin-3a (287 aa).

Positions 1-18 are cleaved as a signal peptide; it reads MPPLWVVLALGCLRLGSG. Topologically, residues 19–207 are lumenal; the sequence is VNLQPQLASV…DTWPGRRSGG (189 aa). Residues asparagine 74, asparagine 139, and asparagine 170 are each glycosylated (N-linked (GlcNAc...) asparagine). A helical membrane pass occupies residues 208-235; sequence MIVITSILGSLPFFLLIGFAGAIVLSLV. The Cytoplasmic segment spans residues 236–287; that stretch reads DRGDADGATSHDSQITQEAVPKSLGTSEPSYTSVNRGPSLDRAEVYASKLQD. Positions 243-274 are disordered; the sequence is ATSHDSQITQEAVPKSLGTSEPSYTSVNRGPS. Residues 259–271 show a composition bias toward polar residues; it reads LGTSEPSYTSVNR.

Belongs to the uroplakin-3 family. As to quaternary structure, heterodimer with uroplakin-1B (UPK1B). Bladder epithelium.

It is found in the endoplasmic reticulum membrane. Component of the asymmetric unit membrane (AUM); a highly specialized biomembrane elaborated by terminally differentiated urothelial cells. May play an important role in AUM-cytoskeleton interaction in terminally differentiated urothelial cells. It also contributes to the formation of urothelial glycocalyx which may play an important role in preventing bacterial adherence. The sequence is that of Uroplakin-3a (UPK3A) from Bos taurus (Bovine).